We begin with the raw amino-acid sequence, 345 residues long: MTPPVATDAAFSHSSNGVVLSTSVDPSGTVLVIGSMTSAQSGAYQKAVEAYSGRQVEMHMVDRLTDGATSLSANTYPLAHLAVNYAEAASPVLLSSLHSALQPKAKLIVEAAELVDASTAQKVKAELIIAGFTDIQVDVATGSVSASKPATASSSFSIGSSSGSSSALPLRRKLGSGASANAKKSLWATQPASANDLIDEASLLRDADFVATTAVKRPDCDVGAGQGKKKKACKGCTCGLRELQEEEKRTANTNIVQLDTDDMDMPNADTPATTKRTEVIETIIGKDGKPKTIKRIQVDTKGATSSCGSCFLGDAFRCSSCPYLGLPAFEPGQKVEIPVGMDDDI.

Residues 11 to 166 are N-terminal SAM-like domain; it reads FSHSSNGVVL…SIGSSSGSSS (156 aa). The interval 147–166 is disordered; that stretch reads SKPATASSSFSIGSSSGSSS. Over residues 153-166 the composition is skewed to low complexity; the sequence is SSSFSIGSSSGSSS. The segment at 167–210 is linker; it reads ALPLRRKLGSGASANAKKSLWATQPASANDLIDEASLLRDADFV. Positions 220, 233, 236, and 238 each coordinate [2Fe-2S] cluster. Positions 220 to 238 are fe-S binding site A; the sequence is CDVGAGQGKKKKACKGCTC. The [4Fe-4S] cluster site is built by Cys307, Cys310, Cys318, and Cys321. 2 short sequence motifs (cx2C motif) span residues 307-310 and 318-321; these read CGSC and CSSC. The interval 307–321 is fe-S binding site B; sequence CGSCFLGDAFRCSSC.

Belongs to the anamorsin family. As to quaternary structure, monomer. Interacts with TAH18. Interacts with MIA40. [2Fe-2S] cluster serves as cofactor. It depends on [4Fe-4S] cluster as a cofactor.

The protein resides in the cytoplasm. Its subcellular location is the mitochondrion intermembrane space. Its function is as follows. Component of the cytosolic iron-sulfur (Fe-S) protein assembly (CIA) machinery required for the maturation of extramitochondrial Fe-S proteins. Part of an electron transfer chain functioning in an early step of cytosolic Fe-S biogenesis, facilitating the de novo assembly of a [4Fe-4S] cluster on the scaffold complex CFD1-NBP35. Electrons are transferred to DRE2 from NADPH via the FAD- and FMN-containing protein TAH18. TAH18-DRE2 are also required for the assembly of the diferric tyrosyl radical cofactor of ribonucleotide reductase (RNR), probably by providing electrons for reduction during radical cofactor maturation in the catalytic small subunit RNR2. This chain is Fe-S cluster assembly protein DRE2, found in Mycosarcoma maydis (Corn smut fungus).